The chain runs to 202 residues: Putative zinc finger protein ZK686.5 (202 aa).

Residues 43–63 (RKNVDNTSTRKPYSYKDRKRK) form a disordered region. C2H2-type zinc fingers lie at residues 110-133 (TYCE…GKVH), 138-160 (IECH…MKTH), and 169-192 (VQCE…DVSH).

Its subcellular location is the nucleus. This Caenorhabditis elegans protein is Putative zinc finger protein ZK686.5.